A 298-amino-acid chain; its full sequence is Inosose dehydratase (298 aa).

The protein belongs to the IolE/MocC family. The cofactor is glutathione. Co(2+) serves as cofactor. It depends on Mn(2+) as a cofactor.

The enzyme catalyses scyllo-inosose = 3D-3,5/4-trihydroxycyclohexane-1,2-dione + H2O. The protein operates within polyol metabolism; myo-inositol degradation into acetyl-CoA; acetyl-CoA from myo-inositol: step 2/7. Functionally, catalyzes the dehydration of inosose (2-keto-myo-inositol, 2KMI or 2,4,6/3,5-pentahydroxycyclohexanone) to 3D-(3,5/4)-trihydroxycyclohexane-1,2-dione (D-2,3-diketo-4-deoxy-epi-inositol). This Bacillus anthracis (strain CDC 684 / NRRL 3495) protein is Inosose dehydratase.